A 191-amino-acid polypeptide reads, in one-letter code: MSTALPLCSILILAGGRGQRMGGRDKGLVSWHGEPLVAHVQHVVREFSDDVVISCNRNQERYALYADQLVSDAEVDFPGPLAGVITGLKVARHEWVVMLACDAPLIDQALIEGLLRLAVEHDSAAMVRQGGYWQPMFSVLPRRVLPMLEHAWAAGERSLQKALLGAVPVQALECAENDQRLSNFNSPELLL.

Residues 13 to 15 (LAG), Lys-26, Asp-72, and Asp-102 each bind GTP. A Mg(2+)-binding site is contributed by Asp-102.

This sequence belongs to the MobA family. In terms of assembly, monomer. The cofactor is Mg(2+).

The protein localises to the cytoplasm. It catalyses the reaction Mo-molybdopterin + GTP + H(+) = Mo-molybdopterin guanine dinucleotide + diphosphate. Its function is as follows. Transfers a GMP moiety from GTP to Mo-molybdopterin (Mo-MPT) cofactor (Moco or molybdenum cofactor) to form Mo-molybdopterin guanine dinucleotide (Mo-MGD) cofactor. The polypeptide is Molybdenum cofactor guanylyltransferase (Pseudomonas entomophila (strain L48)).